The primary structure comprises 94 residues: MSKIEEKLFQDRYRVDSGRPHIRIKDPDHCTELSEKQCTVCCPAGCYTRETNGKVTLVTDGCLECGTCRIICQDSGNLEWEWPRGGFGILFKFG.

2 4Fe-4S ferredoxin-type domains span residues 20–52 and 53–83; these read PHIR…RETN and GKVT…WEWP.

To ferredoxins from P.putida and C.tartarivorum, ferredoxin I from A.vinelandii, ferredoxin II from D.desulfuricans.

Its function is as follows. Could be a 3Fe-4S cluster-containing protein. In Azotobacter vinelandii, this protein is Ferredoxin-like protein (fixX).